Consider the following 374-residue polypeptide: MKFIDEVRIHVASGNGGHGAVSFRREKFIPFGGPDGGDGGRGGSVYLVAQASLNTLIDFRYQRRYRAENGHGGAGRQMTGRAGHDLEIKVPVGTLVYDDDTHELLGDLRFEGERLLIARSGRGGHGNLFYKSSTNRAPRQFEKGGAGEERDLRLELRLLADVGLLGLPNAGKSTLIRAVSAARPKVADYPFTTLYPNLGVVRVAAHESFVLADIPGLIPGASEGAGLGTRFLKHLSRTRLLLHLVDMAPVDGSDPAMNIRALEMELAAYSPTLAARPRWLVVNKSDLLPGEEAEARFQQICTALQWESPAFLISAASGAGCEALVYAIWQALPDLPPAADPTQTEDWGDESDAGERLENWEGDDLDADWEEEQV.

In terms of domain architecture, Obg spans 1–159; it reads MKFIDEVRIH…RDLRLELRLL (159 aa). The region spanning 160–333 is the OBG-type G domain; the sequence is ADVGLLGLPN…LVYAIWQALP (174 aa). Residues 166–173, 191–195, 213–216, 283–286, and 314–316 contribute to the GTP site; these read GLPNAGKS, FTTLY, DIPG, NKSD, and SAA. Residues S173 and T193 each contribute to the Mg(2+) site. Residues 337 to 374 form a disordered region; the sequence is PAADPTQTEDWGDESDAGERLENWEGDDLDADWEEEQV. The span at 360-374 shows a compositional bias: acidic residues; the sequence is WEGDDLDADWEEEQV.

This sequence belongs to the TRAFAC class OBG-HflX-like GTPase superfamily. OBG GTPase family. Monomer. The cofactor is Mg(2+).

It is found in the cytoplasm. Its function is as follows. An essential GTPase which binds GTP, GDP and possibly (p)ppGpp with moderate affinity, with high nucleotide exchange rates and a fairly low GTP hydrolysis rate. Plays a role in control of the cell cycle, stress response, ribosome biogenesis and in those bacteria that undergo differentiation, in morphogenesis control. This chain is GTPase Obg, found in Acidithiobacillus ferrooxidans (strain ATCC 23270 / DSM 14882 / CIP 104768 / NCIMB 8455) (Ferrobacillus ferrooxidans (strain ATCC 23270)).